A 449-amino-acid polypeptide reads, in one-letter code: Glucose-6-phosphate isomerase (449 aa).

The active-site Proton donor is glutamate 291. Residues histidine 312 and lysine 426 contribute to the active site.

This sequence belongs to the GPI family.

The protein localises to the cytoplasm. It catalyses the reaction alpha-D-glucose 6-phosphate = beta-D-fructose 6-phosphate. It participates in carbohydrate biosynthesis; gluconeogenesis. The protein operates within carbohydrate degradation; glycolysis; D-glyceraldehyde 3-phosphate and glycerone phosphate from D-glucose: step 2/4. Functionally, catalyzes the reversible isomerization of glucose-6-phosphate to fructose-6-phosphate. This is Glucose-6-phosphate isomerase from Streptococcus mutans serotype c (strain ATCC 700610 / UA159).